The chain runs to 457 residues: Cysteine--tRNA ligase (457 aa).

Cys28 contacts Zn(2+). The 'HIGH' region motif lies at 30–40 (MTVYDLCHIGH). The Zn(2+) site is built by Cys209, His234, and Glu238. The short motif at 266 to 270 (KMSKS) is the 'KMSKS' region element. Lys269 contributes to the ATP binding site.

It belongs to the class-I aminoacyl-tRNA synthetase family. Monomer. Requires Zn(2+) as cofactor.

It localises to the cytoplasm. The catalysed reaction is tRNA(Cys) + L-cysteine + ATP = L-cysteinyl-tRNA(Cys) + AMP + diphosphate. This is Cysteine--tRNA ligase from Chromobacterium violaceum (strain ATCC 12472 / DSM 30191 / JCM 1249 / CCUG 213 / NBRC 12614 / NCIMB 9131 / NCTC 9757 / MK).